Reading from the N-terminus, the 589-residue chain is Parathyroid hormone/parathyroid hormone-related peptide receptor (589 aa).

The signal sequence occupies residues 1 to 28; it reads MGAARIAPGLALLLCCPVLSSAYALVDA. Over 29 to 188 the chain is Extracellular; that stretch reads DDVMTKEEQI…REREVFDRLG (160 aa). 3 cysteine pairs are disulfide-bonded: Cys48/Cys117, Cys108/Cys148, and Cys131/Cys170. Residues 64 to 105 form a disordered region; the sequence is ESDKGWASASTSGKPKKEKPSGKLHPESEEDKEVPTGSRPRG. Positions 81–90 are enriched in basic and acidic residues; it reads EKPSGKLHPE. N-linked (GlcNAc...) asparagine glycosylation is found at Asn151, Asn161, Asn166, and Asn176. Residues 189–209 form a helical membrane-spanning segment; sequence MIYTVGYSVSLASLTVAVLIL. At 210–223 the chain is on the cytoplasmic side; the sequence is AYFRRLHCTRNYIH. A helical membrane pass occupies residues 224 to 244; sequence MHLFLSFMLRAVSIFVKDAVL. Residues 245–294 lie on the Extracellular side of the membrane; it reads YSGTALDEAERLTEEELRAIAQAPPPPAAAAGYVGCRVAVTFFLYFLATN. Residues 295 to 315 form a helical membrane-spanning segment; that stretch reads YYWILVEGLYLHSLIFMAFFS. The Cytoplasmic portion of the chain corresponds to 316-318; the sequence is EKK. The chain crosses the membrane as a helical span at residues 319-339; that stretch reads YLWGFTVFGWGLPAIFVAVWV. At 340 to 360 the chain is on the extracellular side; sequence SVRATLANTGCWDLSSGNKKW. Residues 361–381 form a helical membrane-spanning segment; it reads IIQVPILASIVLNFILFINIV. The Cytoplasmic portion of the chain corresponds to 382–404; sequence RVLATKLRETNAGRCDTRQQYRK. Residues 405–425 traverse the membrane as a helical segment; the sequence is LLKSTLVLMPLFGVHYIVFMA. Topologically, residues 426–439 are extracellular; the sequence is TPYTEVSGTLWQVQ. Residues 440–460 form a helical membrane-spanning segment; that stretch reads MHYEMLFNSFQGFFVAIIYCF. Residues 461–589 lie on the Cytoplasmic side of the membrane; that stretch reads CNGEVQAEIK…LLQEEWETVM (129 aa). The Important for interaction with G proteins signature appears at 473-476; sequence WSRW. Positions 524–549 are disordered; the sequence is AATTNGHPPLPGHTKSGSPALQATPP. Thr547 carries the phosphothreonine modification.

It belongs to the G-protein coupled receptor 2 family. As to quaternary structure, homodimer in the absence of bound ligand. Peptide hormone binding leads to dissociation of the homodimer. In terms of processing, N-glycosylated.

The protein localises to the cell membrane. Functionally, G-protein-coupled receptor for parathyroid hormone (PTH) and for parathyroid hormone-related peptide (PTHLH). Ligand binding causes a conformation change that triggers signaling via guanine nucleotide-binding proteins (G proteins) and modulates the activity of downstream effectors, such as adenylate cyclase (cAMP). PTH1R is coupled to G(s) G alpha proteins and mediates activation of adenylate cyclase activity. PTHLH dissociates from PTH1R more rapidly than PTH; as consequence, the cAMP response induced by PTHLH decays faster than the response induced by PTH. This Bos taurus (Bovine) protein is Parathyroid hormone/parathyroid hormone-related peptide receptor (PTH1R).